Reading from the N-terminus, the 521-residue chain is FAD-dependent monooxygenase mdpD (521 aa).

The interval 1–48 is disordered; the sequence is MTHFPVNIASDKQEFDPERWAKTPTTESSVNGENGTAPTSGLPSRHPS. Residues 11–21 show a composition bias toward basic and acidic residues; the sequence is DKQEFDPERWA. Residues 23–48 show a composition bias toward polar residues; that stretch reads TPTTESSVNGENGTAPTSGLPSRHPS. The FAD site is built by Val-94 and Arg-160. Catalysis depends on residues Arg-244 and Tyr-271. Positions 369 and 382 each coordinate FAD.

Belongs to the paxM FAD-dependent monooxygenase family. Requires FAD as cofactor.

Its pathway is secondary metabolite biosynthesis. Its function is as follows. FAD-dependent monooxygenase; part of the gene cluster that mediates the biosynthesis of monodictyphenone, a prenyl xanthone derivative. The pathway begins with the synthesis of atrochrysone thioester by the polyketide synthase (PKS) mdpG. The atrochrysone carboxyl ACP thioesterase mdpF then breaks the thioester bond and releases the atrochrysone carboxylic acid from mdpG. The atrochrysone carboxylic acid is then converted to atrochrysone which is further transformed into emodin anthrone. The next step is performed by the anthrone oxygenase mdpH that catalyzes the oxidation of emodinanthrone to emodin. Emodin is further modified to yield monodictyphenone via several steps involving mdpB, mdpC mdpJ, mdpK and mdpL. These enzymes with xptA, xptB and xptC are also proposed to be involved in the synthesis of shamixanthone from emodin. Especially, direct reduction of emodin by the short chain dehydrogenase mdpC followed by dehydration catalyzed by the scytalone dehydratase-like protein mdpB gives loss of oxygen and formation of chrysophanol intermediate in two simple steps. This Emericella nidulans (strain FGSC A4 / ATCC 38163 / CBS 112.46 / NRRL 194 / M139) (Aspergillus nidulans) protein is FAD-dependent monooxygenase mdpD.